Here is a 500-residue protein sequence, read N- to C-terminus: L-arabinose isomerase (500 aa).

Mn(2+) contacts are provided by Glu306, Glu331, His348, and His447.

This sequence belongs to the arabinose isomerase family. Mn(2+) is required as a cofactor.

It catalyses the reaction beta-L-arabinopyranose = L-ribulose. The protein operates within carbohydrate degradation; L-arabinose degradation via L-ribulose; D-xylulose 5-phosphate from L-arabinose (bacterial route): step 1/3. Catalyzes the conversion of L-arabinose to L-ribulose. The protein is L-arabinose isomerase of Anoxybacillus flavithermus (strain DSM 21510 / WK1).